The following is a 117-amino-acid chain: Large ribosomal subunit protein bL20 (117 aa).

This sequence belongs to the bacterial ribosomal protein bL20 family.

Its function is as follows. Binds directly to 23S ribosomal RNA and is necessary for the in vitro assembly process of the 50S ribosomal subunit. It is not involved in the protein synthesizing functions of that subunit. The polypeptide is Large ribosomal subunit protein bL20 (Rickettsia africae (strain ESF-5)).